Reading from the N-terminus, the 147-residue chain is Testis-expressed protein 29 (147 aa).

The Extracellular segment spans residues 1–57 (MRYAPEFKKSPSHLLKKFAVCDIPLYDICDYNVSRDRCKELGCCFYKGICYEKAVPS). A helical membrane pass occupies residues 58-78 (YVQVFSALIVIIAGAFVITII). The Cytoplasmic segment spans residues 79–147 (YRVIQESRRE…IVTEEEETED (69 aa)). Positions 86–147 (RREKEVPTEA…IVTEEEETED (62 aa)) are disordered. Over residues 99 to 108 (AKSSVQVETQ) the composition is skewed to polar residues. A compositionally biased stretch (low complexity) spans 109–120 (PPSSAGAGSKAP). Residues 125–135 (PQSKESGREDA) are compositionally biased toward basic and acidic residues.

It is found in the membrane. This Bos taurus (Bovine) protein is Testis-expressed protein 29 (TEX29).